Reading from the N-terminus, the 97-residue chain is DNA-directed RNA polymerase subunit omega (97 aa).

The protein belongs to the RNA polymerase subunit omega family. The RNAP catalytic core consists of 2 alpha, 1 beta, 1 beta' and 1 omega subunit. When a sigma factor is associated with the core the holoenzyme is formed, which can initiate transcription.

The catalysed reaction is RNA(n) + a ribonucleoside 5'-triphosphate = RNA(n+1) + diphosphate. Promotes RNA polymerase assembly. Latches the N- and C-terminal regions of the beta' subunit thereby facilitating its interaction with the beta and alpha subunits. The sequence is that of DNA-directed RNA polymerase subunit omega from Corynebacterium glutamicum (strain ATCC 13032 / DSM 20300 / JCM 1318 / BCRC 11384 / CCUG 27702 / LMG 3730 / NBRC 12168 / NCIMB 10025 / NRRL B-2784 / 534).